A 134-amino-acid chain; its full sequence is uncharacterized protein (134 aa).

Helical transmembrane passes span 49-69 and 71-91; these read VAVPAVLVLAPFWLIPTSLDV and LSMTLPILIPFVYFSHALNKV.

It is found in the cell membrane. This is an uncharacterized protein from Mycobacterium tuberculosis (strain ATCC 25618 / H37Rv).